A 129-amino-acid polypeptide reads, in one-letter code: Large ribosomal subunit protein uL22 (129 aa).

The protein belongs to the universal ribosomal protein uL22 family. In terms of assembly, part of the 50S ribosomal subunit.

In terms of biological role, this protein binds specifically to 23S rRNA; its binding is stimulated by other ribosomal proteins, e.g. L4, L17, and L20. It is important during the early stages of 50S assembly. It makes multiple contacts with different domains of the 23S rRNA in the assembled 50S subunit and ribosome. The globular domain of the protein is located near the polypeptide exit tunnel on the outside of the subunit, while an extended beta-hairpin is found that lines the wall of the exit tunnel in the center of the 70S ribosome. This is Large ribosomal subunit protein uL22 from Aster yellows witches'-broom phytoplasma (strain AYWB).